Consider the following 151-residue polypeptide: UPAR/Ly6 domain-containing protein rtv (151 aa).

Residues 1-19 form the signal peptide; sequence MQFTSLLLAVIFLISLVSI. Over 20 to 125 the chain is Extracellular; it reads DGLLRRCYQC…QGDLCNGARS (106 aa). 5 disulfides stabilise this stretch: cysteine 26–cysteine 65, cysteine 29–cysteine 38, cysteine 60–cysteine 88, cysteine 100–cysteine 113, and cysteine 115–cysteine 120. Asparagine 45 carries an N-linked (GlcNAc...) asparagine glycan. Asparagine 121 carries the GPI-anchor amidated asparagine lipid modification. The propeptide at 122 to 151 is removed in mature form; sequence GARSWSSAPQMILITMLPLLGSWLLQRMRN. A helical transmembrane segment spans residues 126 to 146; it reads WSSAPQMILITMLPLLGSWLL. At 147 to 151 the chain is on the cytoplasmic side; the sequence is QRMRN.

Belongs to the quiver family.

The protein resides in the cell membrane. In terms of biological role, required for chitin fiber assembly and organization involved in cuticle formation and tracheal development. This is UPAR/Ly6 domain-containing protein rtv from Drosophila melanogaster (Fruit fly).